We begin with the raw amino-acid sequence, 245 residues long: PF03932 family protein CutC (245 aa).

The protein belongs to the CutC family.

The protein resides in the cytoplasm. This Photobacterium profundum (strain SS9) protein is PF03932 family protein CutC.